We begin with the raw amino-acid sequence, 622 residues long: Cilia- and flagella-associated protein 206 (622 aa).

Belongs to the CFAP206 family.

The protein resides in the cytoplasm. It localises to the cytoskeleton. The protein localises to the cilium axoneme. It is found in the cilium basal body. In terms of biological role, essential for sperm motility and is involved in the regulation of the beating frequency of motile cilia on the epithelial cells of the respiratory tract. Required for the establishment of radial spokes in sperm flagella. In Rattus norvegicus (Rat), this protein is Cilia- and flagella-associated protein 206.